The sequence spans 841 residues: GRIP1-associated protein 1 (841 aa).

Ala2 carries the N-acetylalanine modification. Coiled coils occupy residues 4-161 and 208-641; these read ALSE…YGKE and EQLQ…NSKS. Disordered stretches follow at residues 532–551 and 558–580; these read AEES…KQCR and LKGK…EERD. Residues Ser655, Ser666, Ser668, Ser669, Ser688, Ser690, Ser691, and Ser692 each carry the phosphoserine modification. Residues 681 to 706 are disordered; the sequence is SSAVPARSLSSSPQAQPPRPAELSDE. Residues 682–694 are compositionally biased toward low complexity; the sequence is SAVPARSLSSSPQ. 2 coiled-coil regions span residues 701–735 and 785–814; these read AELS…LEVS and DENL…KDME.

In terms of assembly, interacts with GRIP1, GRIP2 and AMPA receptors. Interacts (via C-terminus) with MAPK8/JNK1 and MAP3K1/MEKK1; the interaction promotes MAP3K1-mediated phosphorylation of MAPK8. Interacts (via N-terminus) with RAB4A (in GTP-bound form). Interacts (via C-terminus) with STX12. In terms of processing, proteolytically cleaved by caspase-3. A minor C-terminal proteolytic fragment of 30 kDa is produced. Proteolytic cleavage is required for JNK signaling activation.

Its subcellular location is the early endosome membrane. It localises to the recycling endosome membrane. The protein resides in the cell projection. The protein localises to the axon. It is found in the dendrite. Its subcellular location is the synapse. Regulates the endosomal recycling back to the neuronal plasma membrane, possibly by connecting early and late recycling endosomal domains and promoting segregation of recycling endosomes from early endosomal membranes. Involved in the localization of recycling endosomes to dendritic spines, thereby playing a role in the maintenance of dendritic spine morphology. Required for the activity-induced AMPA receptor recycling to dendrite membranes and for long-term potentiation and synaptic plasticity. Functionally, functions as a scaffold protein to facilitate MAP3K1/MEKK1-mediated activation of the JNK1 kinase by phosphorylation, possibly by bringing MAP3K1/MEKK1 and JNK1 in close proximity. The polypeptide is GRIP1-associated protein 1 (Homo sapiens (Human)).